Consider the following 146-residue polypeptide: Flavodoxin (146 aa).

Residues 4-143 (ALIVYGSTTG…EVLDWAREVL (140 aa)) enclose the Flavodoxin-like domain.

This sequence belongs to the flavodoxin family. FMN serves as cofactor.

In terms of biological role, electron-transfer proteins that function in various electron transport systems in microorganisms. Functionally interchangeable with ferredoxin. The sequence is that of Flavodoxin from Megalodesulfovibrio gigas (strain ATCC 19364 / DSM 1382 / NCIMB 9332 / VKM B-1759) (Desulfovibrio gigas).